We begin with the raw amino-acid sequence, 901 residues long: Glutamate receptor 2.1 (901 aa).

The first 25 residues, 1–25 (MKRENNLVLSLLFFVIVFLMQVGEA), serve as a signal peptide directing secretion. The Extracellular segment spans residues 26–574 (QNRITNVNVG…SSTIFLMPLT (549 aa)). 9 N-linked (GlcNAc...) asparagine glycosylation sites follow: N46, N53, N204, N267, N331, N342, N461, N477, and N536. The chain crosses the membrane as a helical span at residues 575-595 (LALWLISLLSFFIIGLVVWVL). The Cytoplasmic portion of the chain corresponds to 596–604 (EHRVNPDFD). Residues 605–625 (GPGQYQLSTIFWFSFSIMVFA) form a helical membrane-spanning segment. Residues 626-629 (PRER) are Cytoplasmic-facing. Residues 630-650 (VLSFWARVVVIIWYFLVLVLT) traverse the membrane as a helical segment. Over 651–823 (QSYTASLASL…VSFRQLGFDS (173 aa)) the chain is Extracellular. The helical transmembrane segment at 824–844 (FWVLFLVAAIVCTMALLKFVY) threads the bilayer. Topologically, residues 845–901 (QFLKENPNQRNLRVLWEKFNEPDQKSYIKDVTKCQCSSGQGMPKNGQEGANAVNNGN) are cytoplasmic.

The protein belongs to the glutamate-gated ion channel (TC 1.A.10.1) family. In terms of assembly, may form heteromers. As to expression, expressed predominantly in roots. First strongly detected in all cell types of the root except at the apex. Later expressed at the root-shoot junction.

The protein localises to the membrane. Functionally, glutamate-gated receptor that probably acts as a non-selective cation channel. May be involved in light-signal transduction and calcium homeostasis via the regulation of calcium influx into cells. The chain is Glutamate receptor 2.1 (GLR2.1) from Arabidopsis thaliana (Mouse-ear cress).